The sequence spans 377 residues: Tyrosine-protein phosphatase 2 (377 aa).

Residues 27-347 form the Tyrosine-protein phosphatase domain; that stretch reads IDKEFNFILQ…RFCYLAISEA (321 aa). A disordered region spans residues 77–137; that stretch reads IDDDDDDEDD…EDHGGSGDEG (61 aa). Residues 78–91 are compositionally biased toward acidic residues; it reads DDDDDDEDDNEDDI. Low complexity predominate over residues 92–102; that stretch reads IVSNNNNNNNN. Positions 113 to 123 are enriched in polar residues; the sequence is GSSGQSDVMSN. The active-site Phosphocysteine intermediate is cysteine 281.

Belongs to the protein-tyrosine phosphatase family. Non-receptor class subfamily.

The catalysed reaction is O-phospho-L-tyrosyl-[protein] + H2O = L-tyrosyl-[protein] + phosphate. The sequence is that of Tyrosine-protein phosphatase 2 (ptpB) from Dictyostelium discoideum (Social amoeba).